The sequence spans 307 residues: Non-homologous end joining protein Ku (307 aa).

The Ku domain maps to 11 to 179 (LSFGLVSIPV…EVRSMKDLNI (169 aa)). Composition is skewed to low complexity over residues 257–267 (RGGAKAKPAAA) and 290–307 (ARAP…RARK). A disordered region spans residues 257–307 (RGGAKAKPAAAPRRKAPEPVAGMAEATRARKPAARAPKSPAEAPAKVRARK).

This sequence belongs to the prokaryotic Ku family. Homodimer. Interacts with LigD.

In terms of biological role, with LigD forms a non-homologous end joining (NHEJ) DNA repair enzyme, which repairs dsDNA breaks with reduced fidelity. Binds linear dsDNA with 5'- and 3'- overhangs but not closed circular dsDNA nor ssDNA. Recruits and stimulates the ligase activity of LigD. The polypeptide is Non-homologous end joining protein Ku (Paraburkholderia phymatum (strain DSM 17167 / CIP 108236 / LMG 21445 / STM815) (Burkholderia phymatum)).